The following is a 558-amino-acid chain: Small ribosomal subunit protein bS1 (558 aa).

S1 motif domains follow at residues 21–87 (GSII…LSRE), 105–171 (SETV…VSRR), 192–260 (GMHV…LGLK), 277–347 (ETKL…LGLK), 364–434 (GVHV…LGIK), and 451–520 (GAII…LTIH).

This sequence belongs to the bacterial ribosomal protein bS1 family.

Binds mRNA; thus facilitating recognition of the initiation point. It is needed to translate mRNA with a short Shine-Dalgarno (SD) purine-rich sequence. This chain is Small ribosomal subunit protein bS1 (rpsA), found in Buchnera aphidicola subsp. Acyrthosiphon pisum (strain APS) (Acyrthosiphon pisum symbiotic bacterium).